Consider the following 600-residue polypeptide: Adenine deaminase 3 (600 aa).

This sequence belongs to the metallo-dependent hydrolases superfamily. Adenine deaminase family. Requires Mn(2+) as cofactor.

The enzyme catalyses adenine + H2O + H(+) = hypoxanthine + NH4(+). In Rhizobium johnstonii (strain DSM 114642 / LMG 32736 / 3841) (Rhizobium leguminosarum bv. viciae), this protein is Adenine deaminase 3.